Consider the following 156-residue polypeptide: Large ribosomal subunit protein uL11 (156 aa).

The interval 1-20 is disordered; that stretch reads MAQSVKTMVEGGKATTGPPI.

It belongs to the universal ribosomal protein uL11 family. In terms of assembly, part of the ribosomal stalk of the 50S ribosomal subunit. Interacts with L10 and the large rRNA to form the base of the stalk. L10 forms an elongated spine to which L12 dimers bind in a sequential fashion forming a multimeric L10(L12)X complex.

Its function is as follows. Forms part of the ribosomal stalk which helps the ribosome interact with GTP-bound translation factors. The polypeptide is Large ribosomal subunit protein uL11 (Thermoplasma acidophilum (strain ATCC 25905 / DSM 1728 / JCM 9062 / NBRC 15155 / AMRC-C165)).